The following is a 145-amino-acid chain: Large ribosomal subunit protein uL11m (145 aa).

Belongs to the universal ribosomal protein uL11 family.

It is found in the mitochondrion. This chain is Large ribosomal subunit protein uL11m (RPL11), found in Reclinomonas americana.